The sequence spans 414 residues: tRNA dimethylallyltransferase (414 aa).

Residue 33–40 coordinates ATP; sequence APTASGKT. Residue 35–40 coordinates substrate; the sequence is TASGKT. Interaction with substrate tRNA regions lie at residues 58–61, 182–186, and 266–271; these read DSAL, QRITR, and RCVGYR.

This sequence belongs to the IPP transferase family. Monomer. Mg(2+) is required as a cofactor.

It catalyses the reaction adenosine(37) in tRNA + dimethylallyl diphosphate = N(6)-dimethylallyladenosine(37) in tRNA + diphosphate. Catalyzes the transfer of a dimethylallyl group onto the adenine at position 37 in tRNAs that read codons beginning with uridine, leading to the formation of N6-(dimethylallyl)adenosine (i(6)A). The protein is tRNA dimethylallyltransferase of Psychrobacter cryohalolentis (strain ATCC BAA-1226 / DSM 17306 / VKM B-2378 / K5).